The chain runs to 29 residues: Cycloviolacin-O22 (29 aa).

The segment at residues 1-29 (GLPICGETCVGGTCNTPGCTCSWPVCTRN) is a cross-link (cyclopeptide (Gly-Asn)). 3 disulfides stabilise this stretch: C5–C19, C9–C21, and C14–C26.

This is a cyclic peptide. As to expression, expressed in roots and runners but not in leaves, petals and petioles (at protein level).

Functionally, probably participates in a plant defense mechanism. In Viola odorata (Sweet violet), this protein is Cycloviolacin-O22.